Reading from the N-terminus, the 494-residue chain is UPF0371 protein M28_Spy1076 (494 aa).

It belongs to the UPF0371 family.

In Streptococcus pyogenes serotype M28 (strain MGAS6180), this protein is UPF0371 protein M28_Spy1076.